The primary structure comprises 266 residues: Esterase AGAP003155 (266 aa).

Residues Ser114, Asp172, and His199 each act as charge relay system in the active site. Residues Ala231–Asp266 form a disordered region.

It belongs to the LovG family.

In Anopheles gambiae (African malaria mosquito), this protein is Esterase AGAP003155.